The chain runs to 59 residues: Putative zinc finger protein ORF59a (59 aa).

The C2H2-type; degenerate zinc finger occupies 11-33; sequence YQCLRCGLTFRTKKQLIRHLVNT.

This is Putative zinc finger protein ORF59a from Acidianus hospitalis (AFV-1).